Here is a 3123-residue protein sequence, read N- to C-terminus: Protein bark beetle (3123 aa).

The signal sequence occupies residues 1–34 (MKLQHHKTNRQRISKPHRDPKWASICLWLLVTLA). Topologically, residues 35-2714 (FSTHLARSQE…IIDPLSWRAD (2680 aa)) are extracellular. Positions 83-104 (DVTVAPQGSTPSMTSSSSYTEL) are disordered. The segment covering 91 to 102 (STPSMTSSSSYT) has biased composition (low complexity). One can recognise an SRCR 1 domain in the interval 191–295 (IRLVDGPTPV…YHNDLGIQCL (105 aa)). Intrachain disulfides connect C216–C284, C231–C294, and C262–C272. Residue N221 is glycosylated (N-linked (GlcNAc...) asparagine). 3 PbH1 repeats span residues 358–380 (GLPP…NSTR), 382–404 (WAGF…FVNS), and 406–428 (QGAV…KYVG). N-linked (GlcNAc...) asparagine glycosylation is found at N377, N389, and N403. C446 and C474 are joined by a disulfide. The 114-residue stretch at 446–559 (CTLPTTSGQT…NGFFRMTSGD (114 aa)) folds into the CUB domain. Residues N498 and N523 are each glycosylated (N-linked (GlcNAc...) asparagine). PbH1 repeat units follow at residues 562 to 584 (AYDL…AIDN), 586 to 609 (RSKL…HVTS), and 611 to 633 (AGDV…NITY). N615, N620, N630, N639, N658, N672, N702, and N709 each carry an N-linked (GlcNAc...) asparagine glycan. PbH1 repeat units follow at residues 756–778 (NLQG…FINN) and 789–809 (PVKL…HVVS). 3 N-linked (GlcNAc...) asparagine glycosylation sites follow: N834, N900, and N1040. In terms of domain architecture, SRCR 2 spans 1071-1175 (VRLVGGAGAN…HENDVGLRCY (105 aa)). 3 cysteine pairs are disulfide-bonded: C1096–C1164, C1109–C1174, and C1144–C1154. 2 PbH1 repeats span residues 1219-1241 (HARH…GIIY) and 1248-1270 (KSVN…SLKQ). An N-linked (GlcNAc...) asparagine glycan is attached at N1375. PbH1 repeat units follow at residues 1451 to 1475 (VPTL…YYNR) and 1489 to 1511 (NESI…LIRS). N-linked (GlcNAc...) asparagine glycosylation is found at N1489, N1520, and N1529. The PbH1 13 repeat unit spans residues 1553–1575 (LFHYVIQDTTFEQNTHGGFQVSL). N1584, N1593, and N1614 each carry an N-linked (GlcNAc...) asparagine glycan. The PbH1 14 repeat unit spans residues 1722 to 1744 (LYRNLIAENEMDYNLVAGVRSAR). N1883, N1920, and N1940 each carry an N-linked (GlcNAc...) asparagine glycan. Residues 1912 to 2037 (IRLCTSANNC…DDVFVFVSCN (126 aa)) enclose the SRCR 3 domain. 3 disulfides stabilise this stretch: C1950-C2025, C1963-C2036, and C2000-C2010. PbH1 repeat units lie at residues 2104–2126 (HKNP…NMIA) and 2128–2150 (SGKL…SIVS). N2139, N2231, N2251, N2314, and N2357 each carry an N-linked (GlcNAc...) asparagine glycan. PbH1 repeat units follow at residues 2337–2361 (TPTL…FSTC), 2372–2393 (MNSL…RIRA), and 2401–2424 (SLRG…YVEG). Residues N2459, N2536, N2546, N2566, N2596, and N2636 are each glycosylated (N-linked (GlcNAc...) asparagine). Residues 2715 to 2735 (IFAISIISAFVLAIILLILVA) form a helical membrane-spanning segment. At 2736-3123 (FCWFAKSKHR…SHSQPLETAM (388 aa)) the chain is on the cytoplasmic side. Disordered regions lie at residues 2766 to 2789 (IDPQ…LSKG), 2961 to 2983 (YQRS…PFDQ), 2996 to 3015 (LYRP…ADMR), and 3025 to 3123 (RSSK…ETAM). Residues 2778 to 2788 (YNMSSNGTLSK) are compositionally biased toward polar residues. Positions 2964–2973 (SSHSSFMPHR) are enriched in low complexity. 2 stretches are compositionally biased toward low complexity: residues 3047–3057 (PNVAPAGGPAQ) and 3068–3078 (SEESSPTTPSP). Residues 3107-3123 (PLQTNGRSHSQPLETAM) are compositionally biased toward polar residues.

N-glycosylated. Post-translationally, may be proteolytically cleaved in the extracellular domain. In terms of tissue distribution, expression detected in embryonic epithelia and central nervous system (at protein level). First detected during stage 13 in the tracheal system, the foregut, the hindgut, the salivary glands and the epidermis. Expression persists in these tissues until the end of embryogenesis. Expression in epithelia declines from late stage 15 and expression appears in the central nervous system during stage 16.

The protein localises to the cell membrane. Its subcellular location is the cell junction. It localises to the septate junction. It is found in the adherens junction. Its function is as follows. Required for the maturation but not the establishment of septate junctions in developing epithelial cells and is involved in epithelial cell adhesion during septate junction maturation. Plays a role in the proper localization of the septate junction core components pck/mega, kune, Nrx-IV and Nrg during late embryogenesis. Involved in the formation of tricellular junctions which mediate cell contact where three epithelial cells meet but not of bicellular junctions. Required for the accumulation of Gli at tricellular junctions. The protein is Protein bark beetle of Drosophila melanogaster (Fruit fly).